A 132-amino-acid chain; its full sequence is Small ribosomal subunit protein uS8 (132 aa).

The protein belongs to the universal ribosomal protein uS8 family. As to quaternary structure, part of the 30S ribosomal subunit. Contacts proteins S5 and S12.

Its function is as follows. One of the primary rRNA binding proteins, it binds directly to 16S rRNA central domain where it helps coordinate assembly of the platform of the 30S subunit. This Lactococcus lactis subsp. cremoris (strain MG1363) protein is Small ribosomal subunit protein uS8.